Consider the following 253-residue polypeptide: Ribosomal RNA small subunit methyltransferase G (253 aa).

Residues G84, L89, I136–E137, and R155 each bind S-adenosyl-L-methionine.

It belongs to the methyltransferase superfamily. RNA methyltransferase RsmG family.

The protein localises to the cytoplasm. Specifically methylates the N7 position of a guanine in 16S rRNA. This is Ribosomal RNA small subunit methyltransferase G from Prochlorococcus marinus (strain SARG / CCMP1375 / SS120).